Here is a 134-residue protein sequence, read N- to C-terminus: Profilin-3 (134 aa).

Cys-13 and Cys-118 are disulfide-bonded. The Involved in PIP2 interaction motif lies at 84–100 (AVIRGKKGSGGITIKKT). The residue at position 114 (Thr-114) is a Phosphothreonine.

Belongs to the profilin family. Occurs in many kinds of cells as a complex with monomeric actin in a 1:1 ratio. Phosphorylated by MAP kinases.

The protein resides in the cytoplasm. It localises to the cytoskeleton. Functionally, binds to actin and affects the structure of the cytoskeleton. At high concentrations, profilin prevents the polymerization of actin, whereas it enhances it at low concentrations. This Olea europaea (Common olive) protein is Profilin-3.